Here is a 197-residue protein sequence, read N- to C-terminus: Transmembrane 4 L6 family member 5 (197 aa).

The Cytoplasmic portion of the chain corresponds to Met-1–Cys-9. The chain crosses the membrane as a helical span at residues Val-10 to Val-30. Over Pro-31–Gln-46 the chain is Extracellular. The chain crosses the membrane as a helical span at residues Val-47–Ala-67. The Cytoplasmic segment spans residues Val-68–Ser-90. A helical membrane pass occupies residues Val-91 to Gly-111. The interaction with MTOR and CASTOR1 stretch occupies residues Val-91–His-197. The Extracellular portion of the chain corresponds to Leu-112 to Thr-157. An L-arginine-binding site is contributed by Trp-124–Glu-129. Residues Asn-138 and Asn-155 are each glycosylated (N-linked (GlcNAc...) asparagine). A helical transmembrane segment spans residues Leu-158–Val-178. Residues Asn-179–His-197 lie on the Cytoplasmic side of the membrane.

This sequence belongs to the L6 tetraspanin family. Interacts with MTOR; the interaction is positively regulated by arginine and is negatively regulated by leucine. Interacts with SLC38A9. Interacts with SLC7A1; the interaction is negatively regulated by arginine. Interacts with CASTOR1; the interaction is positively regulated by leucine and is negatively regulated by arginine. In terms of tissue distribution, intestine. Overexpressed in pancreatic cancers.

The protein localises to the lysosome membrane. It localises to the cell membrane. In terms of biological role, acts as a lysosomal membrane arginine sensor. Forms a complex with MTOR and SLC38A9 on lysosomal membranes in an arginine-regulated manner, leading to arginine efflux which enables the activation of mTORC1 which subsequently leads to RPS6KB1 and EIF4EBP1 phosphorylations. Facilitates cell cycle G1/S phase progression and the translocation of the CDK4-CCND1 complex into the nucleus. CDKN1B and RHOA/ROCK signaling activity are involved in TM4SF5-mediated acceleration of G1/S phase progression. The polypeptide is Transmembrane 4 L6 family member 5 (TM4SF5) (Homo sapiens (Human)).